The primary structure comprises 67 residues: Protein AaeX (67 aa).

The next 2 helical transmembrane spans lie at 3 to 23 (LFPVIVVFGLSFPPIFFELLL) and 43 to 63 (FVWHPALFNTALYCCLFYLIS).

This sequence belongs to the AaeX family.

The protein resides in the cell membrane. The protein is Protein AaeX of Salmonella agona (strain SL483).